The sequence spans 161 residues: MSTDLCPVYAPFFGVMGCTAAIVFASFGAAYGTAKAGVGISAMGVLRPDLIVKNTIPVVMAGIIAIYGLVVSVLISGNLKQILSLYSGFIQLGAGLSVGLAGLAAGFAIGIVGDAGVRGTAQQPRLFVAMILILIFAEVLGLYGLIVALLLNTRATDNVTC.

Residues 1-9 (MSTDLCPVY) are Lumenal-facing. A helical membrane pass occupies residues 10-32 (APFFGVMGCTAAIVFASFGAAYG). Residues 33 to 54 (TAKAGVGISAMGVLRPDLIVKN) are Cytoplasmic-facing. The helical transmembrane segment at 55–75 (TIPVVMAGIIAIYGLVVSVLI) threads the bilayer. Residues 76 to 91 (SGNLKQILSLYSGFIQ) lie on the Lumenal side of the membrane. Residues 92–113 (LGAGLSVGLAGLAAGFAIGIVG) form a helical membrane-spanning segment. Over 114–125 (DAGVRGTAQQPR) the chain is Cytoplasmic. A helical transmembrane segment spans residues 126-151 (LFVAMILILIFAEVLGLYGLIVALLL). Over 152 to 161 (NTRATDNVTC) the chain is Lumenal.

Belongs to the V-ATPase proteolipid subunit family. As to quaternary structure, V-ATPase is a heteromultimeric enzyme composed of a peripheral catalytic V1 complex (components A to H) attached to an integral membrane V0 proton pore complex (components: a, c, c', c'', d, e, f and VOA1). The decameric c-ring forms the proton-conducting pore, and is composed of eight proteolipid subunits c, one subunit c' and one subunit c''.

It is found in the vacuole membrane. In terms of biological role, proton-conducting pore forming subunit of the V0 complex of vacuolar(H+)-ATPase (V-ATPase), a multisubunit enzyme composed of a peripheral complex (V1) that hydrolyzes ATP and a membrane integral complex (V0) that translocates protons. V-ATPase is responsible for acidifying and maintaining the pH of intracellular compartments. The protein is V-type proton ATPase subunit c of Schizosaccharomyces pombe (strain 972 / ATCC 24843) (Fission yeast).